The chain runs to 1073 residues: Carbamoyl phosphate synthase large chain (1073 aa).

The tract at residues 2-403 (PKRTDIKSIL…SLQKALRGLE (402 aa)) is carboxyphosphate synthetic domain. ATP contacts are provided by Arg-129, Arg-169, Gly-175, Gly-176, Glu-208, Leu-210, Glu-215, Gly-241, Ile-242, His-243, Gln-285, and Glu-299. The 196-residue stretch at 133 to 328 (DVAMKKIGLE…IAKVAAKLAV (196 aa)) folds into the ATP-grasp 1 domain. Residues Gln-285, Glu-299, and Asn-301 each coordinate Mg(2+). Positions 285, 299, and 301 each coordinate Mn(2+). Residues 404-553 (VGATGFDPKV…YSTYEEECEA (150 aa)) are oligomerization domain. The tract at residues 554 to 936 (NPSTDREKIM…AFAKAQLGSN (383 aa)) is carbamoyl phosphate synthetic domain. Residues 679 to 870 (QHAVERLKLK…LAKVAARVMA (192 aa)) form the ATP-grasp 2 domain. Positions 715, 754, 756, 761, 786, 787, 788, 789, 829, and 841 each coordinate ATP. 3 residues coordinate Mg(2+): Gln-829, Glu-841, and Asn-843. Positions 829, 841, and 843 each coordinate Mn(2+). The region spanning 937–1073 (STMKKHGRAL…SVQEMHAQIK (137 aa)) is the MGS-like domain. The segment at 937-1073 (STMKKHGRAL…SVQEMHAQIK (137 aa)) is allosteric domain.

The protein belongs to the CarB family. In terms of assembly, composed of two chains; the small (or glutamine) chain promotes the hydrolysis of glutamine to ammonia, which is used by the large (or ammonia) chain to synthesize carbamoyl phosphate. Tetramer of heterodimers (alpha,beta)4. Mg(2+) serves as cofactor. Mn(2+) is required as a cofactor.

The catalysed reaction is hydrogencarbonate + L-glutamine + 2 ATP + H2O = carbamoyl phosphate + L-glutamate + 2 ADP + phosphate + 2 H(+). It catalyses the reaction hydrogencarbonate + NH4(+) + 2 ATP = carbamoyl phosphate + 2 ADP + phosphate + 2 H(+). Its pathway is amino-acid biosynthesis; L-arginine biosynthesis; carbamoyl phosphate from bicarbonate: step 1/1. It functions in the pathway pyrimidine metabolism; UMP biosynthesis via de novo pathway; (S)-dihydroorotate from bicarbonate: step 1/3. Its function is as follows. Large subunit of the glutamine-dependent carbamoyl phosphate synthetase (CPSase). CPSase catalyzes the formation of carbamoyl phosphate from the ammonia moiety of glutamine, carbonate, and phosphate donated by ATP, constituting the first step of 2 biosynthetic pathways, one leading to arginine and/or urea and the other to pyrimidine nucleotides. The large subunit (synthetase) binds the substrates ammonia (free or transferred from glutamine from the small subunit), hydrogencarbonate and ATP and carries out an ATP-coupled ligase reaction, activating hydrogencarbonate by forming carboxy phosphate which reacts with ammonia to form carbamoyl phosphate. In Escherichia coli (strain K12), this protein is Carbamoyl phosphate synthase large chain.